The primary structure comprises 277 residues: Tetrahydroxynaphthalene reductase PfmaG (277 aa).

NADP(+)-binding residues include Ile36, Asp82, and Asn109. Active-site proton donor residues include Ser158, Ser159, and Tyr173. Residues Tyr173, Lys177, Ile206, and Thr208 each coordinate NADP(+). The active-site Lowers pKa of active site Tyr is Lys177.

The protein belongs to the short-chain dehydrogenases/reductases (SDR) family.

The catalysed reaction is scytalone + NADP(+) = naphthalene-1,3,6,8-tetrol + NADPH + H(+). It functions in the pathway pigment biosynthesis; melanin biosynthesis. Tetrahydroxynaphthalene reductase; part of the gene cluster that mediates the biosynthesis of dihydroxynaphthalene (DHN)-melanin, a bluish-green pigment forming a dark layer in the conidial wall that protects the conidia from UV radiations. The first step of the pathway is the production of the pentaketide 1,3,6,8-tetrahydroxynaphthalene (1,3,6,8-THN or T4HN) by the polyketide synthase PfmaE though condensation of acetyl-CoA with malonyl-CoA. T4HN is not stable and easily oxidizes into the stable form flaviolin. T4HN is also substrate of the hydroxynaphthalene reductase PfmaG to yield scytalone. The scytalone dehydratase PfmaJ then reduces scytalone to 1,3,8-THN. 1,3,8-THN is then substrate of the hydroxynaphthalene reductase PfmaI to yield vermelone. Vermelone is further converted by the multicopper oxidase PfmaD to 1,8-DHN. Finally the laccase PFICI_06862 transforms 1,8-DHN to DHN-melanin. The roles of the 5-oxoprolinase PfmaA and the proline iminopeptidase PfmaB within the cluster have not been elucidated yet. The polypeptide is Tetrahydroxynaphthalene reductase PfmaG (Pestalotiopsis fici (strain W106-1 / CGMCC3.15140)).